A 550-amino-acid chain; its full sequence is Phosphomannomutase (550 aa).

The active-site Phosphoserine intermediate is the S148. S148, D300, D302, and D304 together coordinate Mg(2+).

This sequence belongs to the phosphohexose mutase family. It depends on Mg(2+) as a cofactor.

The enzyme catalyses alpha-D-mannose 1-phosphate = D-mannose 6-phosphate. The sequence is that of Phosphomannomutase (manB) from Mycoplasma genitalium (strain ATCC 33530 / DSM 19775 / NCTC 10195 / G37) (Mycoplasmoides genitalium).